A 310-amino-acid chain; its full sequence is Glutaminase (310 aa).

Substrate is bound by residues Ser-67, Asn-118, Glu-161, Asn-168, Tyr-192, Tyr-244, and Val-262.

It belongs to the glutaminase family. Homotetramer.

The catalysed reaction is L-glutamine + H2O = L-glutamate + NH4(+). This chain is Glutaminase, found in Legionella pneumophila (strain Lens).